The sequence spans 396 residues: Tryptophan synthase beta chain (396 aa).

K88 is subject to N6-(pyridoxal phosphate)lysine.

This sequence belongs to the TrpB family. As to quaternary structure, tetramer of two alpha and two beta chains. Pyridoxal 5'-phosphate is required as a cofactor.

It carries out the reaction (1S,2R)-1-C-(indol-3-yl)glycerol 3-phosphate + L-serine = D-glyceraldehyde 3-phosphate + L-tryptophan + H2O. It participates in amino-acid biosynthesis; L-tryptophan biosynthesis; L-tryptophan from chorismate: step 5/5. In terms of biological role, the beta subunit is responsible for the synthesis of L-tryptophan from indole and L-serine. In Shewanella sp. (strain W3-18-1), this protein is Tryptophan synthase beta chain.